The primary structure comprises 351 residues: Probable galacturonosyltransferase-like 4 (351 aa).

Residues 1–8 (MASRSLSY) are Cytoplasmic-facing. A helical; Signal-anchor for type II membrane protein membrane pass occupies residues 9–29 (TQLLGLLSFILLLVTTTTMAV). Over 30–351 (RVGVILHKPS…YRSSRHSLEE (322 aa)) the chain is Lumenal. Asn96 and Asn203 each carry an N-linked (GlcNAc...) asparagine glycan.

The protein belongs to the glycosyltransferase 8 family.

It is found in the golgi apparatus membrane. The protein operates within glycan metabolism; pectin biosynthesis. May be involved in pectin and/or xylans biosynthesis in cell walls. This Arabidopsis thaliana (Mouse-ear cress) protein is Probable galacturonosyltransferase-like 4 (GATL4).